Consider the following 93-residue polypeptide: DNA-directed RNA polymerase subunit omega (93 aa).

The protein belongs to the RNA polymerase subunit omega family. As to quaternary structure, the RNAP catalytic core consists of 2 alpha, 1 beta, 1 beta' and 1 omega subunit. When a sigma factor is associated with the core the holoenzyme is formed, which can initiate transcription.

The enzyme catalyses RNA(n) + a ribonucleoside 5'-triphosphate = RNA(n+1) + diphosphate. Promotes RNA polymerase assembly. Latches the N- and C-terminal regions of the beta' subunit thereby facilitating its interaction with the beta and alpha subunits. This is DNA-directed RNA polymerase subunit omega from Acinetobacter baylyi (strain ATCC 33305 / BD413 / ADP1).